The chain runs to 373 residues: tRNA N6-adenosine threonylcarbamoyltransferase (373 aa).

The a divalent metal cation site is built by His133, His137, and Tyr154. Substrate is bound by residues 154-158, Asp186, Gly201, Glu205, and Asn302; that span reads YVSGG. An a divalent metal cation-binding site is contributed by Asp331.

The protein belongs to the KAE1 / TsaD family. Component of the EKC/KEOPS complex composed of at least BUD32, CGI121, GON7, KAE1 and PCC1; the whole complex dimerizes. Requires a divalent metal cation as cofactor.

The protein localises to the cytoplasm. It localises to the nucleus. The catalysed reaction is L-threonylcarbamoyladenylate + adenosine(37) in tRNA = N(6)-L-threonylcarbamoyladenosine(37) in tRNA + AMP + H(+). Its function is as follows. Component of the EKC/KEOPS complex that is required for the formation of a threonylcarbamoyl group on adenosine at position 37 (t(6)A37) in tRNAs that read codons beginning with adenine. The complex is probably involved in the transfer of the threonylcarbamoyl moiety of threonylcarbamoyl-AMP (TC-AMP) to the N6 group of A37. KAE1 likely plays a direct catalytic role in this reaction, but requires other protein(s) of the complex to fulfill this activity. The EKC/KEOPS complex also promotes both telomere uncapping and telomere elongation. The complex is required for efficient recruitment of transcriptional coactivators. This Debaryomyces hansenii (strain ATCC 36239 / CBS 767 / BCRC 21394 / JCM 1990 / NBRC 0083 / IGC 2968) (Yeast) protein is tRNA N6-adenosine threonylcarbamoyltransferase.